The following is a 248-amino-acid chain: Deoxyribose-phosphate aldolase (248 aa).

Catalysis depends on Asp-106, which acts as the Proton donor/acceptor. Residue Lys-168 is the Schiff-base intermediate with acetaldehyde of the active site. The Proton donor/acceptor role is filled by Lys-197.

This sequence belongs to the DeoC/FbaB aldolase family. DeoC type 1 subfamily.

Its subcellular location is the cytoplasm. It carries out the reaction 2-deoxy-D-ribose 5-phosphate = D-glyceraldehyde 3-phosphate + acetaldehyde. Its pathway is carbohydrate degradation; 2-deoxy-D-ribose 1-phosphate degradation; D-glyceraldehyde 3-phosphate and acetaldehyde from 2-deoxy-alpha-D-ribose 1-phosphate: step 2/2. Functionally, catalyzes a reversible aldol reaction between acetaldehyde and D-glyceraldehyde 3-phosphate to generate 2-deoxy-D-ribose 5-phosphate. The sequence is that of Deoxyribose-phosphate aldolase from Rhizobium meliloti (strain 1021) (Ensifer meliloti).